A 398-amino-acid polypeptide reads, in one-letter code: Exodeoxyribonuclease 7 large subunit (398 aa).

It belongs to the XseA family. Heterooligomer composed of large and small subunits.

It is found in the cytoplasm. It carries out the reaction Exonucleolytic cleavage in either 5'- to 3'- or 3'- to 5'-direction to yield nucleoside 5'-phosphates.. Bidirectionally degrades single-stranded DNA into large acid-insoluble oligonucleotides, which are then degraded further into small acid-soluble oligonucleotides. This chain is Exodeoxyribonuclease 7 large subunit, found in Anaplasma phagocytophilum (strain HZ).